We begin with the raw amino-acid sequence, 158 residues long: Extracellular giant hemoglobin major globin subunit A2 (158 aa).

Residues 1–16 (MKSLIVFACLVAYAAA) form the signal peptide. The Globin domain maps to 17 to 158 (DCTSLNRLLV…MNQIVSGISG (142 aa)). C18 and C148 are oxidised to a cystine. C89 contacts hydrogen sulfide. Heme b is bound at residue H110.

It belongs to the globin family. In terms of assembly, the 400 kDa hemoglobin consists of a spherical 24-mer arranged as a double layer of dome-shaped dodecamers. Each dodecamer is composed of the 3-fold trimer of the tetramer A1-A2-B1-B2 having one intra-tetramer (A1-B2) disulfide bond and one inter-tetramer (B1-B2) disulfide bond per tetramer.

It is found in the secreted. In terms of biological role, the extracellular giant hemoglobin is able to bind and transport oxygen and hydrosulfide simultaneously and reversibly at two different sites. The polypeptide is Extracellular giant hemoglobin major globin subunit A2 (ghbA2) (Oligobrachia mashikoi (Beard worm)).